The sequence spans 262 residues: UPF0758 protein BTH_I0781 (262 aa).

The disordered stretch occupies residues 1–45 (MQYEIVSAGENVGDEPERERPVAQAAAAPGIPRPAALPAAGAARR). A compositionally biased stretch (low complexity) spans 22–43 (VAQAAAAPGIPRPAALPAAGAA). Positions 140–262 (LVDSPGAVDD…TFSFAQAGWI (123 aa)) constitute an MPN domain. Zn(2+) is bound by residues H211, H213, and D224. The JAMM motif motif lies at 211 to 224 (HNHPSGAVRPSAAD).

The protein belongs to the UPF0758 family.

The protein is UPF0758 protein BTH_I0781 of Burkholderia thailandensis (strain ATCC 700388 / DSM 13276 / CCUG 48851 / CIP 106301 / E264).